A 601-amino-acid chain; its full sequence is NADH-quinone oxidoreductase subunit C/D (601 aa).

An NADH dehydrogenase I subunit C region spans residues 1 to 191; sequence MKLTRDFPHN…DPFMLDAAKQ (191 aa). Positions 215–601 are NADH dehydrogenase I subunit D; the sequence is DYMFLNLGPN…IDFVMSDVDR (387 aa).

It in the N-terminal section; belongs to the complex I 30 kDa subunit family. This sequence in the C-terminal section; belongs to the complex I 49 kDa subunit family. NDH-1 is composed of 13 different subunits. Subunits NuoB, CD, E, F, and G constitute the peripheral sector of the complex.

It is found in the cell inner membrane. It carries out the reaction a quinone + NADH + 5 H(+)(in) = a quinol + NAD(+) + 4 H(+)(out). Its function is as follows. NDH-1 shuttles electrons from NADH, via FMN and iron-sulfur (Fe-S) centers, to quinones in the respiratory chain. The immediate electron acceptor for the enzyme in this species is believed to be ubiquinone. Couples the redox reaction to proton translocation (for every two electrons transferred, four hydrogen ions are translocated across the cytoplasmic membrane), and thus conserves the redox energy in a proton gradient. This chain is NADH-quinone oxidoreductase subunit C/D, found in Shewanella oneidensis (strain ATCC 700550 / JCM 31522 / CIP 106686 / LMG 19005 / NCIMB 14063 / MR-1).